The sequence spans 106 residues: Large ribosomal subunit protein bL21 (106 aa).

This sequence belongs to the bacterial ribosomal protein bL21 family. In terms of assembly, part of the 50S ribosomal subunit. Contacts protein L20.

This protein binds to 23S rRNA in the presence of protein L20. This chain is Large ribosomal subunit protein bL21, found in Thermosipho africanus (strain TCF52B).